Here is an 89-residue protein sequence, read N- to C-terminus: Small ribosomal subunit protein uS14 (89 aa).

Belongs to the universal ribosomal protein uS14 family. As to quaternary structure, part of the 30S ribosomal subunit. Contacts proteins S3 and S10.

Its function is as follows. Binds 16S rRNA, required for the assembly of 30S particles and may also be responsible for determining the conformation of the 16S rRNA at the A site. The protein is Small ribosomal subunit protein uS14 of Deinococcus radiodurans (strain ATCC 13939 / DSM 20539 / JCM 16871 / CCUG 27074 / LMG 4051 / NBRC 15346 / NCIMB 9279 / VKM B-1422 / R1).